Reading from the N-terminus, the 337-residue chain is uncharacterized protein (337 aa).

A run of 2 helical transmembrane segments spans residues 4 to 24 (FIFF…FSLI) and 26 to 46 (LLLW…LFAL).

Belongs to the plectrovirus ORF2 family.

The protein resides in the host membrane. This is an uncharacterized protein from Spiroplasma melliferum (SpV1).